A 341-amino-acid chain; its full sequence is Basic membrane protein B (341 aa).

Residues 1-14 (MRIVIFIFGILLTS) form the signal peptide. C15 carries N-palmitoyl cysteine lipidation. C15 is lipidated: S-diacylglycerol cysteine.

This sequence belongs to the BMP lipoprotein family. As to quaternary structure, monomer.

Its subcellular location is the cell inner membrane. In terms of biological role, may be part of an ABC-type nucleoside uptake system involved in the purine salvage pathway. This Borreliella burgdorferi (strain ATCC 35210 / DSM 4680 / CIP 102532 / B31) (Borrelia burgdorferi) protein is Basic membrane protein B (bmpB).